Reading from the N-terminus, the 183-residue chain is UPF0134 protein MPN_100 (183 aa).

This sequence belongs to the UPF0134 family.

The chain is UPF0134 protein MPN_100 from Mycoplasma pneumoniae (strain ATCC 29342 / M129 / Subtype 1) (Mycoplasmoides pneumoniae).